The chain runs to 370 residues: Cobalt-precorrin-5B C(1)-methyltransferase (370 aa).

Belongs to the CbiD family.

It catalyses the reaction Co-precorrin-5B + S-adenosyl-L-methionine = Co-precorrin-6A + S-adenosyl-L-homocysteine. It functions in the pathway cofactor biosynthesis; adenosylcobalamin biosynthesis; cob(II)yrinate a,c-diamide from sirohydrochlorin (anaerobic route): step 6/10. Functionally, catalyzes the methylation of C-1 in cobalt-precorrin-5B to form cobalt-precorrin-6A. This is Cobalt-precorrin-5B C(1)-methyltransferase from Pseudomonas syringae pv. syringae (strain B728a).